Here is a 36-residue protein sequence, read N- to C-terminus: Photosystem I reaction center subunit VIII (36 aa).

Residues Leu-6–Leu-28 traverse the membrane as a helical segment.

It belongs to the PsaI family.

The protein resides in the plastid. The protein localises to the chloroplast thylakoid membrane. In terms of biological role, may help in the organization of the PsaL subunit. The sequence is that of Photosystem I reaction center subunit VIII from Amborella trichopoda.